Here is a 287-residue protein sequence, read N- to C-terminus: DDRGK domain-containing protein 1 (287 aa).

Residues 1-5 (MDLIL) lie on the Lumenal side of the membrane. The chain crosses the membrane as a helical span at residues 6–26 (LLGIAVALLVILVTLFFFTKG). Residues 27–287 (KGSQESGKYN…LINLVPVSAE (261 aa)) lie on the Cytoplasmic side of the membrane. Disordered regions lie at residues 28–102 (GSQE…KRAK) and 135–164 (KVEA…RQEH). The span at 44–68 (AQAAPRRAQVVRNQRNRARVAAAPA) shows a compositional bias: low complexity. Basic and acidic residues predominate over residues 85 to 102 (IPHADFNGEKMGAKKRAK).

This sequence belongs to the DDRGK1 family. As to quaternary structure, interacts with Atg9; the interaction is transient.

It is found in the endoplasmic reticulum membrane. Its function is as follows. Substrate adapter for ufmylation, the covalent attachment of the ubiquitin-like modifier UFM1 to substrate proteins. Required for ufmylation of Atg9; protects the nervous system during aging, possibly by stabilizing Atg9 and supporting its function. The chain is DDRGK domain-containing protein 1 from Culex quinquefasciatus (Southern house mosquito).